The chain runs to 304 residues: Large ribosomal subunit protein uL2 (304 aa).

The tract at residues 246–282 is disordered; it reads HTRGTAMNPVDHPHGGGEGRTRGKHPESPWGWKTKGY. Residues 256–272 are compositionally biased toward basic and acidic residues; it reads DHPHGGGEGRTRGKHPE.

It belongs to the universal ribosomal protein uL2 family. Part of the 50S ribosomal subunit. Forms a bridge to the 30S subunit in the 70S ribosome.

In terms of biological role, one of the primary rRNA binding proteins. Required for association of the 30S and 50S subunits to form the 70S ribosome, for tRNA binding and peptide bond formation. It has been suggested to have peptidyltransferase activity; this is somewhat controversial. Makes several contacts with the 16S rRNA in the 70S ribosome. The chain is Large ribosomal subunit protein uL2 from Aquifex aeolicus (strain VF5).